A 238-amino-acid polypeptide reads, in one-letter code: SH2 domain-containing adapter protein F (238 aa).

2 disordered regions span residues 1-70 (MEPY…PWEW) and 85-121 (GSEN…EPSS). The residue at position 39 (serine 39) is a Phosphoserine. The segment covering 55 to 66 (EDDERPPEEYDQ) has biased composition (acidic residues). Position 64 is a phosphotyrosine (tyrosine 64). The 96-residue stretch at 138-233 (WYHGAISRTD…AEHMSLLYPV (96 aa)) folds into the SH2 domain.

In terms of assembly, interacts with phosphorylated 'Tyr-720' of PDGFRA via its SH2 domain. Post-translationally, may become phosphorylated upon binding to PDGFRA.

Its function is as follows. Adapter protein which may play a role in the regulation of apoptosis in response to PDGF. The polypeptide is SH2 domain-containing adapter protein F (Mus musculus (Mouse)).